Here is a 491-residue protein sequence, read N- to C-terminus: MSLQMIVENVKLAREYALLGNYDSAMVYYQGVLDQMNKYLYSVKDTHLRQKWQQVWQEINVEAKQVKDIMKTLESFKLDITSLQAAQHELPAAEGEVWSLPVPVERRPLPGPRKRQSSQHSDPKPHSNRPSTVVRAHRPSPQNLHNDRGKAVRSREKKEQSKGREEKNKLPAAVTEPEANKFDGTGYDKDLVEALERDIISQNPNVRWYDIADLVEAKKLLQEAVVLPMWMPEFFKGIRRPWKGVLMVGPPGTGKTLLAKAVATECKTTFFNVSSSTLTSKYRGESEKLVRLLFEMARFYSPATIFIDEIDSICSRRGTSEEHEASRRMKAELLVQMDGVGGASENDDPSKMVMVLAATNFPWDIDEALRRRLEKRIYIPLPSAKGREELLRISLRELELADDVNLASIAENMEGYSGADITNVCRDASLMAMRRRIEGLTPEEIRNLSREAMHMPTTMEDFEMALKKISKSVSAADIERYEKWIVEFGSC.

Residues 1–29 (MSLQMIVENVKLAREYALLGNYDSAMVYY) form an interaction with KATNB1 region. Residues 1-75 (MSLQMIVENV…VKDIMKTLES (75 aa)) form an interaction with dynein and NDEL1 region. Positions 1–185 (MSLQMIVENV…EPEANKFDGT (185 aa)) are interaction with microtubules; sufficient for microtubule severing activity. The residue at position 42 (Ser42) is a Phosphoserine; by DYRK2. Residues 101–182 (PVPVERRPLP…AVTEPEANKF (82 aa)) are disordered. Residues 145-169 (HNDRGKAVRSREKKEQSKGREEKNK) are compositionally biased toward basic and acidic residues. 249–256 (GPPGTGKT) contacts ATP.

It belongs to the AAA ATPase family. Katanin p60 subunit A1 subfamily. As to quaternary structure, can homooligomerize into hexameric rings, which may be promoted by interaction with microtubules. Interacts with KATNB1, which may serve as a targeting subunit. Interacts with ASPM; the katanin complex formation KATNA1:KATNB1 is required for the association of ASPM. Interacts with dynein and NDEL1. Associates with the E3 ligase complex containing DYRK2, EDD/UBR5, DDB1 and DCAF1 proteins (EDVP complex). Interacts with KLHL42 (via the kelch domains). Interacts with CUL3; the interaction is enhanced by KLHL42. Interacts with KATNB1 and KATNBL1. Interacts with CAMSAP2 and CAMSAP3; leading to regulate the length of CAMSAP-decorated microtubule stretches. In terms of processing, phosphorylation by DYRK2 triggers ubiquitination and subsequent degradation. Ubiquitinated by the BCR(KLHL42) E3 ubiquitin ligase complex, leading to its proteasomal degradation. Ubiquitinated by the EDVP E3 ligase complex and subsequently targeted for proteasomal degradation.

The protein resides in the cytoplasm. It is found in the midbody. It localises to the cytoskeleton. Its subcellular location is the microtubule organizing center. The protein localises to the centrosome. The protein resides in the spindle pole. It is found in the spindle. It catalyses the reaction n ATP + n H2O + a microtubule = n ADP + n phosphate + (n+1) alpha/beta tubulin heterodimers.. With respect to regulation, ATPase activity is stimulated by microtubules, which promote homooligomerization. ATP-dependent microtubule severing is stimulated by interaction with KATNB1. Its function is as follows. Catalytic subunit of a complex which severs microtubules in an ATP-dependent manner. Microtubule severing may promote rapid reorganization of cellular microtubule arrays and the release of microtubules from the centrosome following nucleation. Microtubule release from the mitotic spindle poles may allow depolymerization of the microtubule end proximal to the spindle pole, leading to poleward microtubule flux and poleward motion of chromosome. The function in regulating microtubule dynamics at spindle poles seems to depend on the association of the katanin KATNA1:KATNB1 complex with ASPM which recruits it to microtubules. Reversely KATNA1:KATNB1 can enhance ASPM blocking activity on microtubule minus-end growth. Microtubule release within the cell body of neurons may be required for their transport into neuronal processes by microtubule-dependent motor proteins. This transport is required for axonal growth. The chain is Katanin p60 ATPase-containing subunit A1 (Katna1) from Mus musculus (Mouse).